We begin with the raw amino-acid sequence, 385 residues long: S-adenosylmethionine synthase (385 aa).

His-16 serves as a coordination point for ATP. Asp-18 provides a ligand contact to Mg(2+). Glu-44 is a binding site for K(+). The L-methionine site is built by Glu-57 and Gln-100. The interval Gln-100–Arg-110 is flexible loop. ATP-binding positions include Asp-164–Lys-166, Lys-230–Phe-231, Asp-239, Arg-245–Lys-246, Ala-262, and Lys-266. Asp-239 contacts L-methionine. Lys-270 contributes to the L-methionine binding site.

This sequence belongs to the AdoMet synthase family. As to quaternary structure, homotetramer; dimer of dimers. Requires Mg(2+) as cofactor. K(+) serves as cofactor.

Its subcellular location is the cytoplasm. The catalysed reaction is L-methionine + ATP + H2O = S-adenosyl-L-methionine + phosphate + diphosphate. It functions in the pathway amino-acid biosynthesis; S-adenosyl-L-methionine biosynthesis; S-adenosyl-L-methionine from L-methionine: step 1/1. In terms of biological role, catalyzes the formation of S-adenosylmethionine (AdoMet) from methionine and ATP. The overall synthetic reaction is composed of two sequential steps, AdoMet formation and the subsequent tripolyphosphate hydrolysis which occurs prior to release of AdoMet from the enzyme. The polypeptide is S-adenosylmethionine synthase (Helicobacter acinonychis (strain Sheeba)).